Consider the following 486-residue polypeptide: Glycogen synthase (486 aa).

ADP-alpha-D-glucose is bound at residue K20.

It belongs to the glycosyltransferase 1 family. Bacterial/plant glycogen synthase subfamily.

The catalysed reaction is [(1-&gt;4)-alpha-D-glucosyl](n) + ADP-alpha-D-glucose = [(1-&gt;4)-alpha-D-glucosyl](n+1) + ADP + H(+). It functions in the pathway glycan biosynthesis; glycogen biosynthesis. Its function is as follows. Synthesizes alpha-1,4-glucan chains using ADP-glucose. In Aeromonas salmonicida (strain A449), this protein is Glycogen synthase.